The chain runs to 77 residues: MSCCGGNCGCGSACKCGNGCGGCKMNADLSYTESTTTETIVMGVGSAKAQFEGAEMGAESGGCKCGANCTCDPCTCK.

It belongs to the metallothionein superfamily. Type 15 family.

Metallothioneins have a high content of cysteine residues that bind various heavy metals. The chain is Metallothionein-like protein 2 (MT1A) from Trifolium repens (Creeping white clover).